Consider the following 185-residue polypeptide: Large ribosomal subunit protein uL22 (185 aa).

The interval 157 to 185 (VAAPSPEEDAPKKKQSKKKMARQKLMQRD) is disordered. Over residues 169-178 (KKQSKKKMAR) the composition is skewed to basic residues.

The protein belongs to the universal ribosomal protein uL22 family.

This Ixodes scapularis (Black-legged tick) protein is Large ribosomal subunit protein uL22 (RpL17).